A 350-amino-acid chain; its full sequence is tRNA uridine(34) hydroxylase (350 aa).

Residues 146–240 form the Rhodanese domain; it reads DDPDALFIDM…YARKAREQGL (95 aa). Cys-200 functions as the Cysteine persulfide intermediate in the catalytic mechanism.

The protein belongs to the TrhO family.

It carries out the reaction uridine(34) in tRNA + AH2 + O2 = 5-hydroxyuridine(34) in tRNA + A + H2O. In terms of biological role, catalyzes oxygen-dependent 5-hydroxyuridine (ho5U) modification at position 34 in tRNAs, the first step in 5-carboxymethoxyuridine (cmo5U) biosynthesis. May be part of an alternate pathway, which is able to bypass cmo5U biogenesis in a subset of tRNAs under aerobic conditions. The protein is tRNA uridine(34) hydroxylase of Escherichia coli (strain K12).